The chain runs to 607 residues: Large ribosomal subunit assembly factor BipA (607 aa).

Residues 3–198 (EKLRNIAIIA…AIVDHVPAPD (196 aa)) form the tr-type G domain. Residues 15-20 (DHGKTT) and 128-131 (NKVD) contribute to the GTP site.

It belongs to the TRAFAC class translation factor GTPase superfamily. Classic translation factor GTPase family. BipA subfamily. In terms of assembly, monomer.

It is found in the cytoplasm. It carries out the reaction GTP + H2O = GDP + phosphate + H(+). In terms of biological role, a 50S ribosomal subunit assembly protein with GTPase activity, required for 50S subunit assembly at low temperatures, may also play a role in translation. Binds GTP and analogs. Binds the 70S ribosome between the 30S and 50S subunits, in a similar position as ribosome-bound EF-G; it contacts a number of ribosomal proteins, both rRNAs and the A-site tRNA. This Shigella flexneri protein is Large ribosomal subunit assembly factor BipA.